We begin with the raw amino-acid sequence, 315 residues long: Glycine--tRNA ligase alpha subunit (315 aa).

It belongs to the class-II aminoacyl-tRNA synthetase family. As to quaternary structure, tetramer of two alpha and two beta subunits.

The protein localises to the cytoplasm. The catalysed reaction is tRNA(Gly) + glycine + ATP = glycyl-tRNA(Gly) + AMP + diphosphate. The protein is Glycine--tRNA ligase alpha subunit of Pseudomonas aeruginosa (strain LESB58).